The sequence spans 284 residues: Lipoyl synthase (284 aa).

[4Fe-4S] cluster contacts are provided by cysteine 36, cysteine 41, cysteine 47, cysteine 62, cysteine 66, cysteine 69, and serine 273. One can recognise a Radical SAM core domain in the interval 48–262; sequence WGKGTATFMI…RTIGLKKGFR (215 aa).

The protein belongs to the radical SAM superfamily. Lipoyl synthase family. [4Fe-4S] cluster is required as a cofactor.

The protein resides in the cytoplasm. The catalysed reaction is [[Fe-S] cluster scaffold protein carrying a second [4Fe-4S](2+) cluster] + N(6)-octanoyl-L-lysyl-[protein] + 2 oxidized [2Fe-2S]-[ferredoxin] + 2 S-adenosyl-L-methionine + 4 H(+) = [[Fe-S] cluster scaffold protein] + N(6)-[(R)-dihydrolipoyl]-L-lysyl-[protein] + 4 Fe(3+) + 2 hydrogen sulfide + 2 5'-deoxyadenosine + 2 L-methionine + 2 reduced [2Fe-2S]-[ferredoxin]. It participates in protein modification; protein lipoylation via endogenous pathway; protein N(6)-(lipoyl)lysine from octanoyl-[acyl-carrier-protein]: step 2/2. Its function is as follows. Catalyzes the radical-mediated insertion of two sulfur atoms into the C-6 and C-8 positions of the octanoyl moiety bound to the lipoyl domains of lipoate-dependent enzymes, thereby converting the octanoylated domains into lipoylated derivatives. In Phocaeicola vulgatus (strain ATCC 8482 / DSM 1447 / JCM 5826 / CCUG 4940 / NBRC 14291 / NCTC 11154) (Bacteroides vulgatus), this protein is Lipoyl synthase.